Reading from the N-terminus, the 191-residue chain is MAREPREGGRGGREREQGDDLVDKLVTINRVAKVVKGGRRFAFAALVVVGDQKGRVGYGAGKAREVPEAIRKATERAKRTMIRVPMKEGRTLHHDTFGHYGAGKVVVRAAEAGTGIIAGGPMRAVFESLGVNDVVAKSLGTRNPHNMIKATFAALEKASSPRHVASRRGKKAAELFGKREQGQTEAEVTNG.

The 64-residue stretch at 21–84 (LVDKLVTINR…ERAKRTMIRV (64 aa)) folds into the S5 DRBM domain. Positions 161-191 (PRHVASRRGKKAAELFGKREQGQTEAEVTNG) are disordered. Basic and acidic residues predominate over residues 171–182 (KAAELFGKREQG).

The protein belongs to the universal ribosomal protein uS5 family. As to quaternary structure, part of the 30S ribosomal subunit. Contacts proteins S4 and S8.

Its function is as follows. With S4 and S12 plays an important role in translational accuracy. Functionally, located at the back of the 30S subunit body where it stabilizes the conformation of the head with respect to the body. The sequence is that of Small ribosomal subunit protein uS5 from Gluconobacter oxydans (strain 621H) (Gluconobacter suboxydans).